The following is a 77-amino-acid chain: U11-lycotoxin-Ls1a (77 aa).

The N-terminal stretch at 1–20 (MKLIILTGLVLFAIVSFIEA) is a signal peptide. Residues 21-26 (EEETGR) constitute a propeptide that is removed on maturation.

This sequence belongs to the neurotoxin 19 (CSTX) family. 10 (U11-Lctx) subfamily. In terms of processing, contains 4 disulfide bonds. In terms of tissue distribution, expressed by the venom gland.

It is found in the secreted. The polypeptide is U11-lycotoxin-Ls1a (Lycosa singoriensis (Wolf spider)).